A 354-amino-acid polypeptide reads, in one-letter code: UPF0421 protein BH2644 (354 aa).

Helical transmembrane passes span alanine 22–isoleucine 42, leucine 60–phenylalanine 80, threonine 107–alanine 127, and valine 133–proline 153.

This sequence belongs to the UPF0421 family.

The protein resides in the cell membrane. The chain is UPF0421 protein BH2644 from Halalkalibacterium halodurans (strain ATCC BAA-125 / DSM 18197 / FERM 7344 / JCM 9153 / C-125) (Bacillus halodurans).